A 186-amino-acid chain; its full sequence is Protein SPMIP2 (186 aa).

The interval 163 to 186 (SSLPRASKPPKLPKLPKKEKKRKH) is disordered. A compositionally biased stretch (basic residues) spans 176–186 (KLPKKEKKRKH).

The protein is Protein SPMIP2 of Homo sapiens (Human).